A 212-amino-acid polypeptide reads, in one-letter code: Dephospho-CoA kinase (212 aa).

The DPCK domain occupies 3–204; it reads ILGLTGSIGM…GSRPAAPVGG (202 aa). 11 to 16 provides a ligand contact to ATP; it reads GMGKST.

Belongs to the CoaE family.

Its subcellular location is the cytoplasm. The enzyme catalyses 3'-dephospho-CoA + ATP = ADP + CoA + H(+). Its pathway is cofactor biosynthesis; coenzyme A biosynthesis; CoA from (R)-pantothenate: step 5/5. Functionally, catalyzes the phosphorylation of the 3'-hydroxyl group of dephosphocoenzyme A to form coenzyme A. This is Dephospho-CoA kinase from Paramagnetospirillum magneticum (strain ATCC 700264 / AMB-1) (Magnetospirillum magneticum).